Here is a 406-residue protein sequence, read N- to C-terminus: Renin (406 aa).

A signal peptide spans 1–23 (MDGWRRMPRWGLLLLLWGSCTFG). The propeptide at 24-66 (LPTDTTTFKRIFLKRMPSIRESLKERGVDMARLGPEWSQPMKR) is activation peptide. Asparagine 71 carries an N-linked (GlcNAc...) asparagine glycan. The region spanning 86 to 403 (YYGEIGIGTP…DRRNNRIGFA (318 aa)) is the Peptidase A1 domain. Residue aspartate 104 is part of the active site. Cysteine 117 and cysteine 124 are disulfide-bonded. N-linked (GlcNAc...) asparagine glycosylation is present at asparagine 141. Cysteines 283 and 287 form a disulfide. Aspartate 292 is an active-site residue. A disulfide bond links cysteine 325 and cysteine 362.

It belongs to the peptidase A1 family. As to quaternary structure, interacts with ATP6AP2.

It is found in the secreted. The protein resides in the membrane. It catalyses the reaction Cleavage of Leu-|-Xaa bond in angiotensinogen to generate angiotensin I.. Its activity is regulated as follows. Interaction with ATP6AP2 results in a 5-fold increased efficiency in angiotensinogen processing. Its function is as follows. Renin is a highly specific endopeptidase, whose only known function is to generate angiotensin I from angiotensinogen in the plasma, initiating a cascade of reactions that produce an elevation of blood pressure and increased sodium retention by the kidney. The sequence is that of Renin (REN) from Homo sapiens (Human).